Reading from the N-terminus, the 723-residue chain is Fatty acid oxidation complex subunit alpha (723 aa).

An enoyl-CoA hydratase/isomerase region spans residues 1 to 189 (MIYQAKTLQV…KVGLLDAIVD (189 aa)). Substrate is bound at residue D296. Residues 311–723 (SQDTQHAAVL…FYSAQQASAL (413 aa)) form a 3-hydroxyacyl-CoA dehydrogenase region. Residues M325, D344, 401–403 (VVE), K408, and S430 contribute to the NAD(+) site. Catalysis depends on H451, which acts as the For 3-hydroxyacyl-CoA dehydrogenase activity. N454 contacts NAD(+). Substrate contacts are provided by N501 and Y661.

In the N-terminal section; belongs to the enoyl-CoA hydratase/isomerase family. This sequence in the C-terminal section; belongs to the 3-hydroxyacyl-CoA dehydrogenase family. Heterotetramer of two alpha chains (FadB) and two beta chains (FadA).

It carries out the reaction a (3S)-3-hydroxyacyl-CoA + NAD(+) = a 3-oxoacyl-CoA + NADH + H(+). The enzyme catalyses a (3S)-3-hydroxyacyl-CoA = a (2E)-enoyl-CoA + H2O. It catalyses the reaction a 4-saturated-(3S)-3-hydroxyacyl-CoA = a (3E)-enoyl-CoA + H2O. The catalysed reaction is (3S)-3-hydroxybutanoyl-CoA = (3R)-3-hydroxybutanoyl-CoA. It carries out the reaction a (3Z)-enoyl-CoA = a 4-saturated (2E)-enoyl-CoA. The enzyme catalyses a (3E)-enoyl-CoA = a 4-saturated (2E)-enoyl-CoA. Its pathway is lipid metabolism; fatty acid beta-oxidation. Functionally, involved in the aerobic and anaerobic degradation of long-chain fatty acids via beta-oxidation cycle. Catalyzes the formation of 3-oxoacyl-CoA from enoyl-CoA via L-3-hydroxyacyl-CoA. It can also use D-3-hydroxyacyl-CoA and cis-3-enoyl-CoA as substrate. The polypeptide is Fatty acid oxidation complex subunit alpha (Vibrio cholerae serotype O1 (strain ATCC 39541 / Classical Ogawa 395 / O395)).